A 440-amino-acid polypeptide reads, in one-letter code: COP9 signalosome complex subunit 4 (440 aa).

One can recognise a PCI domain in the interval 216–386 (SNRQFLAASQ…RIIYFESGLE (171 aa)).

Belongs to the CSN4 family. As to quaternary structure, component of the COP9 signalosome (CSN) complex.

The protein localises to the cytoplasm. It is found in the nucleus. Component of the COP9 signalosome (CSN) complex that acts as an regulator of the ubiquitin (Ubl) conjugation pathway by mediating the deneddylation of the cullin subunit of SCF-type E3 ubiquitin-protein ligase complexes. The CSN complex is involved in the regulation of the circadian clock through its control of the stability of the SCF(FWD1) complex. This is COP9 signalosome complex subunit 4 (csn-4) from Neurospora crassa (strain ATCC 24698 / 74-OR23-1A / CBS 708.71 / DSM 1257 / FGSC 987).